We begin with the raw amino-acid sequence, 185 residues long: Ribosome-recycling factor (185 aa).

This sequence belongs to the RRF family.

It localises to the cytoplasm. Its function is as follows. Responsible for the release of ribosomes from messenger RNA at the termination of protein biosynthesis. May increase the efficiency of translation by recycling ribosomes from one round of translation to another. The protein is Ribosome-recycling factor of Pseudomonas putida (strain GB-1).